The following is a 194-amino-acid chain: Protein GrpE (194 aa).

This sequence belongs to the GrpE family. In terms of assembly, homodimer.

The protein localises to the cytoplasm. Its function is as follows. Participates actively in the response to hyperosmotic and heat shock by preventing the aggregation of stress-denatured proteins, in association with DnaK and GrpE. It is the nucleotide exchange factor for DnaK and may function as a thermosensor. Unfolded proteins bind initially to DnaJ; upon interaction with the DnaJ-bound protein, DnaK hydrolyzes its bound ATP, resulting in the formation of a stable complex. GrpE releases ADP from DnaK; ATP binding to DnaK triggers the release of the substrate protein, thus completing the reaction cycle. Several rounds of ATP-dependent interactions between DnaJ, DnaK and GrpE are required for fully efficient folding. The chain is Protein GrpE from Aliivibrio salmonicida (strain LFI1238) (Vibrio salmonicida (strain LFI1238)).